The sequence spans 456 residues: GPI-anchored protein 13 (456 aa).

The N-terminal stretch at 1–23 is a signal peptide; that stretch reads MRSPSLAVAATTVLGLFSSSALA. N-linked (GlcNAc...) asparagine glycosylation occurs at asparagine 27. A lipid anchor (GPI-anchor amidated glycine) is attached at glycine 433. A propeptide spans 434–456 (removed in mature form); that stretch reads AAAVNVVPTTAFGLFAIILASIF.

The GPI-anchor is attached to the protein in the endoplasmic reticulum and serves to target the protein to the cell surface. There, the glucosamine-inositol phospholipid moiety is cleaved off and the GPI-modified mannoprotein is covalently attached via its lipidless GPI glycan remnant to the 1,6-beta-glucan of the outer cell wall layer.

The protein localises to the secreted. The protein resides in the cell wall. Its subcellular location is the membrane. Its function is as follows. Cell wall protein which contributes to cell wall synthesis and is important for acquiring normal surface properties. Required for virulence in a mouse infection model. This chain is GPI-anchored protein 13 (PGA13), found in Candida albicans (strain SC5314 / ATCC MYA-2876) (Yeast).